An 85-amino-acid chain; its full sequence is Large ribosomal subunit protein bL27 (85 aa).

The interval 1–22 (MAKTKAGGSTRNGRDSKGRRLG) is disordered.

This sequence belongs to the bacterial ribosomal protein bL27 family.

The protein is Large ribosomal subunit protein bL27 of Mycoplasmopsis pulmonis (strain UAB CTIP) (Mycoplasma pulmonis).